Reading from the N-terminus, the 357-residue chain is S-adenosylmethionine:tRNA ribosyltransferase-isomerase (357 aa).

This sequence belongs to the QueA family. In terms of assembly, monomer.

Its subcellular location is the cytoplasm. It carries out the reaction 7-aminomethyl-7-carbaguanosine(34) in tRNA + S-adenosyl-L-methionine = epoxyqueuosine(34) in tRNA + adenine + L-methionine + 2 H(+). The protein operates within tRNA modification; tRNA-queuosine biosynthesis. In terms of biological role, transfers and isomerizes the ribose moiety from AdoMet to the 7-aminomethyl group of 7-deazaguanine (preQ1-tRNA) to give epoxyqueuosine (oQ-tRNA). This is S-adenosylmethionine:tRNA ribosyltransferase-isomerase from Buchnera aphidicola subsp. Acyrthosiphon pisum (strain Tuc7).